A 192-amino-acid polypeptide reads, in one-letter code: Adenylate kinase (192 aa).

Residue 10–18 participates in ATP binding; it reads GVPGVGGTT.

Belongs to the archaeal adenylate kinase family. Monomer.

It localises to the cytoplasm. The enzyme catalyses AMP + ATP = 2 ADP. In Methanothermococcus thermolithotrophicus (Methanococcus thermolithotrophicus), this protein is Adenylate kinase (adkA).